The following is a 466-amino-acid chain: 3-isopropylmalate dehydratase large subunit (466 aa).

[4Fe-4S] cluster contacts are provided by Cys-349, Cys-410, and Cys-413.

This sequence belongs to the aconitase/IPM isomerase family. LeuC type 1 subfamily. Heterodimer of LeuC and LeuD. It depends on [4Fe-4S] cluster as a cofactor.

The enzyme catalyses (2R,3S)-3-isopropylmalate = (2S)-2-isopropylmalate. It participates in amino-acid biosynthesis; L-leucine biosynthesis; L-leucine from 3-methyl-2-oxobutanoate: step 2/4. Catalyzes the isomerization between 2-isopropylmalate and 3-isopropylmalate, via the formation of 2-isopropylmaleate. This chain is 3-isopropylmalate dehydratase large subunit, found in Ruthia magnifica subsp. Calyptogena magnifica.